The chain runs to 251 residues: HTH-type transcriptional regulator IolR (251 aa).

The HTH deoR-type domain maps to 1-57 (MKLMRIQEMEEYILSHGTVSLDELCQVFNVSKNTVRRDINKLTEKGAIEKVYGGVTS). A DNA-binding region (H-T-H motif) is located at residues 19-38 (VSLDELCQVFNVSKNTVRRD).

In terms of biological role, iol operon repressor. This is HTH-type transcriptional regulator IolR (iolR) from Bacillus subtilis (strain 168).